The sequence spans 414 residues: DNA primase large subunit PriL (414 aa).

C251, C352, C370, and C376 together coordinate [4Fe-4S] cluster.

Belongs to the eukaryotic-type primase large subunit family. As to quaternary structure, heterodimer of a small subunit (PriS) and a large subunit (PriL). The cofactor is [4Fe-4S] cluster.

Functionally, regulatory subunit of DNA primase, an RNA polymerase that catalyzes the synthesis of short RNA molecules used as primers for DNA polymerase during DNA replication. Stabilizes and modulates the activity of the small subunit, increasing the rate of DNA synthesis, and conferring RNA synthesis capability. The DNA polymerase activity may enable DNA primase to also catalyze primer extension after primer synthesis. May also play a role in DNA repair. This is DNA primase large subunit PriL from Methanocaldococcus jannaschii (strain ATCC 43067 / DSM 2661 / JAL-1 / JCM 10045 / NBRC 100440) (Methanococcus jannaschii).